The primary structure comprises 122 residues: Large ribosomal subunit protein uL14 (122 aa).

The protein belongs to the universal ribosomal protein uL14 family. As to quaternary structure, part of the 50S ribosomal subunit. Forms a cluster with proteins L3 and L19. In the 70S ribosome, L14 and L19 interact and together make contacts with the 16S rRNA in bridges B5 and B8.

In terms of biological role, binds to 23S rRNA. Forms part of two intersubunit bridges in the 70S ribosome. This is Large ribosomal subunit protein uL14 from Prosthecochloris aestuarii (strain DSM 271 / SK 413).